A 48-amino-acid chain; its full sequence is Large ribosomal subunit protein bL33A (48 aa).

Belongs to the bacterial ribosomal protein bL33 family.

In Streptococcus pyogenes serotype M28 (strain MGAS6180), this protein is Large ribosomal subunit protein bL33A.